Consider the following 505-residue polypeptide: RNA-splicing ligase RtcB homolog (505 aa).

Mn(2+) contacts are provided by aspartate 119, cysteine 122, histidine 227, and histidine 259. 226–230 serves as a coordination point for GMP; sequence NHYAE. At serine 300 the chain carries Phosphoserine. Histidine 353 is a binding site for Mn(2+). GMP contacts are provided by residues 353–354, 402–405, serine 409, and 428–431; these read HN, GGTM, and HGAG. The GMP-histidine intermediate role is filled by histidine 428. A Glycyl lysine isopeptide (Lys-Gly) (interchain with G-Cter in SUMO2) cross-link involves residue lysine 496. Lysine 504 serves as a coordination point for GMP.

Belongs to the RtcB family. As to quaternary structure, catalytic component of the tRNA-splicing ligase complex. Requires Mn(2+) as cofactor.

It is found in the nucleus. Its subcellular location is the cytoplasm. The enzyme catalyses a 3'-end 3'-phospho-ribonucleotide-RNA + a 5'-end dephospho-ribonucleoside-RNA + GTP = a ribonucleotidyl-ribonucleotide-RNA + GMP + diphosphate. It catalyses the reaction a 3'-end 2',3'-cyclophospho-ribonucleotide-RNA + a 5'-end dephospho-ribonucleoside-RNA + GTP + H2O = a ribonucleotidyl-ribonucleotide-RNA + GMP + diphosphate + H(+). In terms of biological role, catalytic subunit of the tRNA-splicing ligase complex that acts by directly joining spliced tRNA halves to mature-sized tRNAs by incorporating the precursor-derived splice junction phosphate into the mature tRNA as a canonical 3',5'-phosphodiester. May act as an RNA ligase with broad substrate specificity, and may function toward other RNAs. The protein is RNA-splicing ligase RtcB homolog of Sus scrofa (Pig).